The following is a 457-amino-acid chain: Peptidyl-prolyl cis-trans isomerase FKBP5 (457 aa).

Met1 bears the N-acetylmethionine mark. Over residues 1–11 (MTTDEGAKNSR) the composition is skewed to basic and acidic residues. Residues 1-27 (MTTDEGAKNSRENPTATVAEQGEDVTS) are disordered. Residue Lys28 is modified to N6-acetyllysine. PPIase FKBP-type domains are found at residues 50 to 138 (GDKV…LDFK) and 165 to 251 (GARV…KSFE). 3 TPR repeats span residues 268–301 (AAIVKEKGTLYFKGGKYVQAVIQYGKIVSWLEME), 317–350 (LAAFLNLAMCYLKLREYTKAVECCDKALGLDSAN), and 351–384 (EKGLYRRGEAQLLMNEFESAKGDFEKVLEVNPQN). Residues 423 to 457 (EEANKAMSKKTSEGVTNEKLAVSHAVEEEKPEGHV) form a disordered region. At Ser445 the chain carries Phosphoserine. A compositionally biased stretch (basic and acidic residues) spans 447–457 (AVEEEKPEGHV).

Part of a heteromultimeric cytoplasmic complex with HSP90AA1, HSPA1A/HSPA1B and steroid receptors. Upon ligand binding dissociates from the complex and FKBP4 takes its place. Interacts with functionally mature heterooligomeric progesterone receptor complexes along with HSP90 and TEBP. Interacts with NR3C1. Interacts with Akt/AKT1 and PHLPP1; enhancing dephosphorylation and subsequent activation of Akt/AKT1. Interacts with IFI44L; this interaction modulates the kinase activity of IKBKB and IKBKE. Interacts with IKBKB and IKBKE. Post-translationally, acetylation impairs ability to promote interaction between Akt/AKT1 and PHLPP1. Deacetylation by SIRT7 promotes interaction between Akt/AKT1 and PHLPP1, leading to suppress Akt/AKT1 activation. In terms of processing, ubiquitinated, leading to degradation in a proteasome-dependent manner. Deubiquitinated by USP49, leading to stabilization.

It is found in the cytoplasm. The protein localises to the nucleus. It catalyses the reaction [protein]-peptidylproline (omega=180) = [protein]-peptidylproline (omega=0). With respect to regulation, inhibited by both FK506 and rapamycin. In terms of biological role, immunophilin protein with PPIase and co-chaperone activities. Component of unligated steroid receptors heterocomplexes through interaction with heat-shock protein 90 (HSP90). Plays a role in the intracellular trafficking of heterooligomeric forms of steroid hormone receptors maintaining the complex into the cytoplasm when unliganded. Acts as a regulator of Akt/AKT1 activity by promoting the interaction between Akt/AKT1 and PHLPP1, thereby enhancing dephosphorylation and subsequent activation of Akt/AKT1. Interacts with IKBKE and IKBKB which facilitates IKK complex assembly leading to increased IKBKE and IKBKB kinase activity, NF-kappaB activation, and IFN production. This chain is Peptidyl-prolyl cis-trans isomerase FKBP5 (FKBP5), found in Aotus nancymaae (Ma's night monkey).